Consider the following 251-residue polypeptide: NADPH-dependent oxidoreductase (251 aa).

Belongs to the flavin oxidoreductase frp family. Requires FMN as cofactor.

In terms of biological role, reduces FMN, organic nitro compounds and disulfide DTNB. Involved in maintenance of the cellular redox state and the disulfide stress response. The polypeptide is NADPH-dependent oxidoreductase (nfrA) (Staphylococcus aureus (strain USA300)).